The sequence spans 211 residues: Small ribosomal subunit protein eS1 (211 aa).

It belongs to the eukaryotic ribosomal protein eS1 family.

The chain is Small ribosomal subunit protein eS1 from Methanothrix thermoacetophila (strain DSM 6194 / JCM 14653 / NBRC 101360 / PT) (Methanosaeta thermophila).